The sequence spans 256 residues: Polycomb group RING finger protein 5 (256 aa).

The RING-type zinc finger occupies cysteine 18–glycine 57. 2 stretches are compositionally biased toward basic and acidic residues: residues glutamate 94–proline 103 and aspartate 110–aspartate 120. The interval glutamate 94–histidine 133 is disordered.

As to quaternary structure, component of a PRC1-like complex that contains PCGF5, RNF2 and UBE2D3. Interacts with RNF2; the interaction is direct. Interacts with CBX6, CBX7 and CBX8. Interacts with AUTS2; the interaction is direct. Identified in a complex that contains AUTS2, PCGF5, CSNK2B and RNF2.

It localises to the nucleus. The protein localises to the nucleoplasm. Component of a Polycomb group (PcG) multiprotein PRC1-like complex, a complex class required to maintain the transcriptionally repressive state of many genes, including Hox genes, throughout development. PcG PRC1 complex acts via chromatin remodeling and modification of histones; it mediates monoubiquitination of histone H2A 'Lys-119', rendering chromatin heritably changed in its expressibility. Within the PRC1-like complex, regulates RNF2 ubiquitin ligase activity. Plays a redundant role with PCGF3 as part of a PRC1-like complex that mediates monoubiquitination of histone H2A 'Lys-119' on the X chromosome and is required for normal silencing of one copy of the X chromosome in XX females. In Homo sapiens (Human), this protein is Polycomb group RING finger protein 5 (PCGF5).